Here is a 316-residue protein sequence, read N- to C-terminus: Olfactory receptor 10H3 (316 aa).

Over 1-25 (MPGQNYRTISEFILSGFSAFPQQLL) the chain is Extracellular. Residues 26-46 (PVLFLLYLLMFLFTLLGNLLI) traverse the membrane as a helical segment. Over 47 to 54 (MATVWIER) the chain is Cytoplasmic. Residues 55 to 75 (RLHTPMYLFLCALSISEILFT) form a helical membrane-spanning segment. Topologically, residues 76-99 (VAITPRMLADLLFTHRSITFVACA) are extracellular. The cysteines at positions 98 and 190 are disulfide-linked. Residues 100–120 (IQMFFSFMFGFTHSFLLMVMG) form a helical membrane-spanning segment. At 121-139 (YDHYVTICHPLHYNMLMSP) the chain is on the cytoplasmic side. Residues 140–160 (RGCAHLVAWTWAGGSVMGMMV) form a helical membrane-spanning segment. The Extracellular portion of the chain corresponds to 161 to 197 (TMMVFHLTFCGSNVIHHFLCHVLSLLKLACGSKTSSV). A helical membrane pass occupies residues 198–218 (IMGVMLVCVTALIGCLFLIIL). Topologically, residues 219-238 (SFVFIVAAILRIPSAEGRHK) are cytoplasmic. Residues 239–259 (TFSTCVSHLTVVVMHYSFASL) traverse the membrane as a helical segment. Residues 260–272 (IYLKPKGLHSMYS) lie on the Extracellular side of the membrane. A helical transmembrane segment spans residues 273 to 293 (DALMATTYTVFTPFLSPIIFS). At 294–316 (LRNKELKNAINKNFCRRFCPLSS) the chain is on the cytoplasmic side.

This sequence belongs to the G-protein coupled receptor 1 family.

It is found in the cell membrane. In terms of biological role, odorant receptor. The sequence is that of Olfactory receptor 10H3 (OR10H3) from Homo sapiens (Human).